Reading from the N-terminus, the 203-residue chain is Peptidyl-prolyl cis-trans isomerase FKBP11 (203 aa).

The first 29 residues, 1 to 29 (MTLRPSLLPLRLLLLLLLLLRGAVCQAEA), serve as a signal peptide directing secretion. A PPIase FKBP-type domain is found at 59–146 (GDTLHIHYSG…HFDVELIALI (88 aa)). The chain crosses the membrane as a helical span at residues 158–178 (ILPLVGMAMVPALLGLIGYHL).

The protein belongs to the FKBP-type PPIase family. As to quaternary structure, interacts with IFITM5.

Its subcellular location is the membrane. It carries out the reaction [protein]-peptidylproline (omega=180) = [protein]-peptidylproline (omega=0). PPIases accelerate the folding of proteins during protein synthesis. This chain is Peptidyl-prolyl cis-trans isomerase FKBP11 (FKBP11), found in Bos taurus (Bovine).